The following is a 50-amino-acid chain: Sperm protamine P1 (50 aa).

2 cysteine pairs are disulfide-bonded: cysteine 7–cysteine 15 and cysteine 38–cysteine 46.

It belongs to the protamine P1 family. Cross-linked by interchain disulfide bonds around the DNA-helix. As to expression, testis.

It localises to the nucleus. It is found in the chromosome. Protamines substitute for histones in the chromatin of sperm during the haploid phase of spermatogenesis. They compact sperm DNA into a highly condensed, stable and inactive complex. The protein is Sperm protamine P1 (PRM1) of Equus caballus (Horse).